The primary structure comprises 258 residues: Global transcriptional regulator CodY (258 aa).

The GAF domain stretch occupies residues 1–156; sequence MSSLLSKTRR…SATIVGMEML (156 aa). Positions 204 to 223 form a DNA-binding region, H-T-H motif; it reads ASKIADKVGITRSVIVNALR.

Belongs to the CodY family.

It is found in the cytoplasm. Its function is as follows. DNA-binding global transcriptional regulator which is involved in the adaptive response to starvation and acts by directly or indirectly controlling the expression of numerous genes in response to nutrient availability. During rapid exponential growth, CodY is highly active and represses genes whose products allow adaptation to nutrient depletion. The chain is Global transcriptional regulator CodY from Clostridium botulinum (strain Alaska E43 / Type E3).